The primary structure comprises 262 residues: UDP-2,3-diacylglucosamine hydrolase (262 aa).

7 residues coordinate Mn(2+): aspartate 10, histidine 12, aspartate 47, asparagine 86, histidine 121, histidine 218, and histidine 220.

The protein belongs to the LpxH family. The cofactor is Mn(2+).

The protein localises to the cell inner membrane. It localises to the cytoplasm. The enzyme catalyses UDP-2-N,3-O-bis[(3R)-3-hydroxytetradecanoyl]-alpha-D-glucosamine + H2O = 2-N,3-O-bis[(3R)-3-hydroxytetradecanoyl]-alpha-D-glucosaminyl 1-phosphate + UMP + 2 H(+). It participates in glycolipid biosynthesis; lipid IV(A) biosynthesis; lipid IV(A) from (3R)-3-hydroxytetradecanoyl-[acyl-carrier-protein] and UDP-N-acetyl-alpha-D-glucosamine: step 4/6. Functionally, hydrolyzes the pyrophosphate bond of UDP-2,3-diacylglucosamine to yield 2,3-diacylglucosamine 1-phosphate (lipid X) and UMP by catalyzing the attack of water at the alpha-P atom. Involved in the biosynthesis of lipid A, a phosphorylated glycolipid that anchors the lipopolysaccharide to the outer membrane of the cell. This chain is UDP-2,3-diacylglucosamine hydrolase, found in Porphyromonas gingivalis (strain ATCC BAA-308 / W83).